The primary structure comprises 289 residues: 4-hydroxy-tetrahydrodipicolinate synthase (289 aa).

A pyruvate-binding site is contributed by Thr45. The Proton donor/acceptor role is filled by Tyr133. The active-site Schiff-base intermediate with substrate is the Lys161. Residue Ile200 coordinates pyruvate.

The protein belongs to the DapA family. In terms of assembly, homotetramer; dimer of dimers.

Its subcellular location is the cytoplasm. It carries out the reaction L-aspartate 4-semialdehyde + pyruvate = (2S,4S)-4-hydroxy-2,3,4,5-tetrahydrodipicolinate + H2O + H(+). The protein operates within amino-acid biosynthesis; L-lysine biosynthesis via DAP pathway; (S)-tetrahydrodipicolinate from L-aspartate: step 3/4. In terms of biological role, catalyzes the condensation of (S)-aspartate-beta-semialdehyde [(S)-ASA] and pyruvate to 4-hydroxy-tetrahydrodipicolinate (HTPA). The polypeptide is 4-hydroxy-tetrahydrodipicolinate synthase (Coxiella burnetii (strain Dugway 5J108-111)).